The sequence spans 466 residues: 3-isopropylmalate dehydratase large subunit (466 aa).

The [4Fe-4S] cluster site is built by cysteine 347, cysteine 407, and cysteine 410.

It belongs to the aconitase/IPM isomerase family. LeuC type 1 subfamily. As to quaternary structure, heterodimer of LeuC and LeuD. Requires [4Fe-4S] cluster as cofactor.

The catalysed reaction is (2R,3S)-3-isopropylmalate = (2S)-2-isopropylmalate. It participates in amino-acid biosynthesis; L-leucine biosynthesis; L-leucine from 3-methyl-2-oxobutanoate: step 2/4. In terms of biological role, catalyzes the isomerization between 2-isopropylmalate and 3-isopropylmalate, via the formation of 2-isopropylmaleate. The chain is 3-isopropylmalate dehydratase large subunit from Vibrio vulnificus (strain YJ016).